A 97-amino-acid chain; its full sequence is Cobalt transport protein CbiN (97 aa).

A run of 2 helical transmembrane segments spans residues 6 to 26 (VLMILGVIILILAPLIMYSGL) and 68 to 88 (SLLFALQAAIGAIIIGYFFGY).

This sequence belongs to the CbiN family. As to quaternary structure, forms an energy-coupling factor (ECF) transporter complex composed of an ATP-binding protein (A component, CbiO), a transmembrane protein (T component, CbiQ) and 2 possible substrate-capture proteins (S components, CbiM and CbiN) of unknown stoichimetry.

The protein localises to the cell membrane. It participates in cofactor biosynthesis; adenosylcobalamin biosynthesis. Its function is as follows. Part of the energy-coupling factor (ECF) transporter complex CbiMNOQ involved in cobalt import. The sequence is that of Cobalt transport protein CbiN from Methanococcus maripaludis (strain C5 / ATCC BAA-1333).